Here is a 446-residue protein sequence, read N- to C-terminus: Ribulose bisphosphate carboxylase large chain (446 aa).

Residues Asn89 and Thr139 each coordinate substrate. Lys141 (proton acceptor) is an active-site residue. Lys143 is a substrate binding site. Mg(2+) is bound by residues Lys167, Asp169, and Glu170. At Lys167 the chain carries N6-carboxylysine. His260 functions as the Proton acceptor in the catalytic mechanism. Positions 261, 293, and 345 each coordinate substrate.

The protein belongs to the RuBisCO large chain family. Type I subfamily. Heterohexadecamer of 8 large chains and 8 small chains; disulfide-linked. The disulfide link is formed within the large subunit homodimers. Requires Mg(2+) as cofactor. The disulfide bond which can form in the large chain dimeric partners within the hexadecamer appears to be associated with oxidative stress and protein turnover.

The protein resides in the plastid. The protein localises to the chloroplast. It catalyses the reaction 2 (2R)-3-phosphoglycerate + 2 H(+) = D-ribulose 1,5-bisphosphate + CO2 + H2O. The enzyme catalyses D-ribulose 1,5-bisphosphate + O2 = 2-phosphoglycolate + (2R)-3-phosphoglycerate + 2 H(+). RuBisCO catalyzes two reactions: the carboxylation of D-ribulose 1,5-bisphosphate, the primary event in carbon dioxide fixation, as well as the oxidative fragmentation of the pentose substrate in the photorespiration process. Both reactions occur simultaneously and in competition at the same active site. This Exacum affine (Persian violet) protein is Ribulose bisphosphate carboxylase large chain.